We begin with the raw amino-acid sequence, 365 residues long: MAPCTLWRCCQRTVGWVPVLFITFVVVWSYYAYVVELCVFTLSGNGENGKAVVYLVAFHLFFVMFVWSYWMTIFTSPASPSKEFCLSNSEKERYEKEFSQERQQEILRRAARDLPIYTTSASKTVRYCERCQLIKPDRAHHCSACDMCILKMDHHCPWVNNCVGFSNYKFFLLFLFYSLLYCLFVATTVLQYFIKFWTNELTDTRAKFHVLFLFFVSTMFFISVLSLLSYHCWLVGKNRTTIESFRAPMFSYGTDGNGFSLGCSKNWRQVFGDEKKYWLLPVFSSQGDGCSFPTRLVGTDPEQASVSNQSESARSIGSNQPFPIKPLSESKNRLLDSDPQWLESGSEEGVGGSGTNNHVTVAIEN.

The Cytoplasmic segment spans residues Met1–Val14. The chain crosses the membrane as a helical span at residues Gly15–Val35. The Lumenal portion of the chain corresponds to Glu36 to Val53. Residues Tyr54 to Phe74 traverse the membrane as a helical segment. Over Thr75–Lys169 the chain is Cytoplasmic. One can recognise a DHHC domain in the interval Arg126–Phe176. Cys128 and Cys131 together coordinate Zn(2+). Substrate-binding positions include Lys135 and His140–Ser143. Zn(2+) contacts are provided by His141, Cys142, Cys145, Cys148, and His155. Cys156 (S-palmitoyl cysteine intermediate) is an active-site residue. Cys162 contributes to the Zn(2+) binding site. The helical transmembrane segment at Phe170–Leu190 threads the bilayer. Over Gln191 to Lys207 the chain is Lumenal. The chain crosses the membrane as a helical span at residues Phe208–His231. Residues Cys232–Asn365 lie on the Cytoplasmic side of the membrane. The disordered stretch occupies residues Pro301–Asn365. Positions Glu302–Pro321 are enriched in polar residues. 2 positions are modified to phosphoserine: Ser305 and Ser330.

Belongs to the DHHC palmitoyltransferase family. Autopalmitoylated (in vitro).

The protein resides in the golgi apparatus membrane. The protein localises to the cell membrane. Its subcellular location is the cytoplasm. It localises to the perinuclear region. It is found in the endoplasmic reticulum membrane. The protein resides in the endoplasmic reticulum-Golgi intermediate compartment membrane. The catalysed reaction is L-cysteinyl-[protein] + hexadecanoyl-CoA = S-hexadecanoyl-L-cysteinyl-[protein] + CoA. The enzyme catalyses L-cysteinyl-[protein] + tetradecanoyl-CoA = S-tetradecanoyl-L-cysteinyl-[protein] + CoA. It carries out the reaction L-cysteinyl-[protein] + octadecanoyl-CoA = S-octadecanoyl-L-cysteinyl-[protein] + CoA. Its function is as follows. Palmitoyltransferase that could catalyze the addition of palmitate onto various protein substrates. Catalyzes palmitoylation of Cys residues in the cytoplasmic C-terminus of EGFR, and modulates the duration of EGFR signaling by modulating palmitoylation-dependent EGFR internalization and degradation. Has a preference for acyl-CoA with C16 fatty acid chains. Can also utilize acyl-CoA with C14 and C18 fatty acid chains. May palmitoylate CALHM1 subunit of gustatory voltage-gated ion channels and modulate channel gating and kinetics. The protein is Palmitoyltransferase ZDHHC20 of Bos taurus (Bovine).